The sequence spans 207 residues: Small ribosomal subunit protein uS4 (207 aa).

In terms of domain architecture, S4 RNA-binding spans R98–N164.

Belongs to the universal ribosomal protein uS4 family. As to quaternary structure, part of the 30S ribosomal subunit. Contacts protein S5. The interaction surface between S4 and S5 is involved in control of translational fidelity.

One of the primary rRNA binding proteins, it binds directly to 16S rRNA where it nucleates assembly of the body of the 30S subunit. Functionally, with S5 and S12 plays an important role in translational accuracy. The chain is Small ribosomal subunit protein uS4 from Clostridioides difficile (strain 630) (Peptoclostridium difficile).